The primary structure comprises 378 residues: tRNA (guanine(26)-N(2))-dimethyltransferase (378 aa).

A Trm1 methyltransferase domain is found at 4 to 374 (KEVTEGKVRI…KGYEEIIRCV (371 aa)). S-adenosyl-L-methionine is bound by residues Arg44, Arg69, Asp87, Asp114, and Ala115. The Zn(2+) site is built by Cys246, Cys249, Cys263, and Cys266.

It belongs to the class I-like SAM-binding methyltransferase superfamily. Trm1 family.

The enzyme catalyses guanosine(26) in tRNA + 2 S-adenosyl-L-methionine = N(2)-dimethylguanosine(26) in tRNA + 2 S-adenosyl-L-homocysteine + 2 H(+). In terms of biological role, dimethylates a single guanine residue at position 26 of a number of tRNAs using S-adenosyl-L-methionine as donor of the methyl groups. The sequence is that of tRNA (guanine(26)-N(2))-dimethyltransferase from Saccharolobus islandicus (strain Y.G.57.14 / Yellowstone #1) (Sulfolobus islandicus).